The following is a 333-amino-acid chain: FAD-dependent monooxygenase pytG (333 aa).

Residues 6 to 26 traverse the membrane as a helical segment; the sequence is LPNVSVAIIGAGIGGLTLGAF. Positions 38 and 109 each coordinate FAD. N303 carries N-linked (GlcNAc...) asparagine glycosylation.

This sequence belongs to the paxM FAD-dependent monooxygenase family. The cofactor is FAD.

The protein resides in the membrane. It participates in secondary metabolite biosynthesis. Functionally, FAD-dependent monooxygenase; part of the gene cluster that mediates the biosynthesis of pyranterreones, a family of antioxidative compounds. The first step of pyranonigrins biosynthesis is performed by the hybrid PKS-NRPS synthetase pytA that condenses 4 malonyl-CoA units ato the acetyl starter unit by the modular PKS of pytA. The acyl chain is then connected to an L-serine through the amide bond by the modular NRPS of pytA. A tetramic acid is formed and released from the PKS-NRPS pytA to give pyranterreone 5 with the help of the thioesterase pytI. Pyranterreone 5 could be methylated by pytC to afford pyranterreone 6. Both pyranterreones 5 and 6 are subsequently oxidized by the FAD-linked oxidoreductase pytB and the cytochrome P450 monooxygenase pytD to form the fused gamma-pyrone core, resulting in pyranterreones 7 and 11, respectively. The hydroxy group at C-8 of pyranterreones 7 and 11 are dehydrated by the aspartyl protease pytH to form a delta-7 double bond to give pyranterreones 3 and 1, 2 accordingly. The exo-methylene of pyranterreone 3 could be reduced into a pendant methyl by reductase pytE to provide pyranterreone 4, also known as cordylactam. Pyranterreone 4 can be reconverted to pyranterreone 3 through pytB-catalyzed dehydrogenation or further oxidized to pyranterreones 9 and 10. The polypeptide is FAD-dependent monooxygenase pytG (Aspergillus terreus (strain NIH 2624 / FGSC A1156)).